Here is a 438-residue protein sequence, read N- to C-terminus: Serine--tRNA ligase (438 aa).

T235–E237 is an L-serine binding site. ATP is bound by residues R266–E268 and V282. Position 289 (E289) interacts with L-serine. Residue E355–S358 participates in ATP binding. T393 lines the L-serine pocket.

This sequence belongs to the class-II aminoacyl-tRNA synthetase family. Type-1 seryl-tRNA synthetase subfamily. As to quaternary structure, homodimer. The tRNA molecule binds across the dimer.

The catalysed reaction is tRNA(Ser) + L-serine + ATP = L-seryl-tRNA(Ser) + AMP + diphosphate + H(+). The enzyme catalyses tRNA(Sec) + L-serine + ATP = L-seryl-tRNA(Sec) + AMP + diphosphate + H(+). The protein operates within aminoacyl-tRNA biosynthesis; selenocysteinyl-tRNA(Sec) biosynthesis; L-seryl-tRNA(Sec) from L-serine and tRNA(Sec): step 1/1. Catalyzes the attachment of serine to tRNA(Ser). Is also able to aminoacylate tRNA(Sec) with serine, to form the misacylated tRNA L-seryl-tRNA(Sec), which will be further converted into selenocysteinyl-tRNA(Sec). The chain is Serine--tRNA ligase from Helianthus annuus (Common sunflower).